Consider the following 381-residue polypeptide: Creatine kinase M-type (381 aa).

The Phosphagen kinase N-terminal domain occupies 11-98 (KLNYKPQEEY…FDPIIQDRHG (88 aa)). In terms of domain architecture, Phosphagen kinase C-terminal spans 125 to 367 (YVLSSRVRTG…KLMVEMEKKL (243 aa)). Position 128 to 132 (128 to 132 (SSRVR)) interacts with ATP. Position 164 is a phosphoserine (S164). The residue at position 166 (T166) is a Phosphothreonine. The residue at position 178 (S178) is a Phosphoserine. A Phosphothreonine modification is found at T180. ATP is bound at residue H191. Phosphoserine is present on S199. ATP contacts are provided by R236 and R292. Phosphothreonine is present on residues T313 and T322. ATP contacts are provided by residues 320–325 (RGTGGV) and D335. Position 372 is a phosphoserine (S372).

The protein belongs to the ATP:guanido phosphotransferase family. Dimer of identical or non-identical chains, which can be either B (brain type) or M (muscle type). With MM being the major form in skeletal muscle and myocardium, MB existing in myocardium, and BB existing in many tissues, especially brain.

It is found in the cytoplasm. The catalysed reaction is creatine + ATP = N-phosphocreatine + ADP + H(+). Reversibly catalyzes the transfer of phosphate between ATP and various phosphogens (e.g. creatine phosphate). Creatine kinase isoenzymes play a central role in energy transduction in tissues with large, fluctuating energy demands, such as skeletal muscle, heart, brain and spermatozoa. In Mus musculus (Mouse), this protein is Creatine kinase M-type (Ckm).